Here is a 938-residue protein sequence, read N- to C-terminus: MTQSLPLLNGTEAYKLVTTQGLYDKTVKFYEKYLQLVHDKRVGTLTNSLITLKLVVDNSFKPLDVVNDKDWRAIVSSALVFSCTNIQHFRDLAAGETIQAYPNETNPIEIYLKDPNGYIIGITETKNAISIKPTLPKQSVEASLISSRSSRIDIASSGVSTDSSYPAIPKTAKAQKSIAVMTSGGDAPGMNANVRAIVRTAIFKGCNAFVVMEGYEGLVKGGPNYIKQVYWETVRNWSCEGGTNIGTARCKEFREREGRLLGALHLIEAGVDALIVCGGDGSLTGADLFRSEWPSLIRELLDQGRINKVQFDRYQHLNICGTVGSIDNDMSTTDATIGAYSALDRICQAIDYIEATANSHSRAFVVEVMGRNCGWLALLAGISTSADYILIPEKPASSREWQDQMCDIISKHRSRGKRTTIVIVAEGAISADLTPISSKDVHKVLVDRLGLDCRITTLGHVQRGGTAVAYDRILATLQGVEAVNAVLESTPDTPSPLIAINENKITRKPLVESVQLTKSVAEAIHSKDFKKAMQLRDSEFVEHLDNFMAINSADHIEPKLPEHTHMKIAIVNVGAPAGGMNSAVYSMATYCMSQGHKPYAIYNGWTGLTRHESVRSLNWKDLLGWQSRGGSEIGTNRHTPEEADIGLIAYYFQKYGFDGIIIVGGFEAFVSLHQLERARENYTAFRIPMVLIPATLSNNVPGTEYSLGSDTALNSLMQYCDIIKQSAASTRGRVFVVDVQGGNSGYLATHAAVAVGAQVSYVPEEGISLEQLTQDIENLTESFSEAEGRGKFGQLILKSTNASKVLTPEVLAEVITQEAEGHFDAKCAIPGHVQQGGLPSPIDRTRGTRFAIRAVGFIESQHKVLAAEANLDDDDFDFDTPKIIATASVLGVKGSDIVFSSIRQLYDFETELNKRTPKTIHWQSTRTIADHLVGRKKL.

An N-terminal catalytic PFK domain 1 region spans residues 1 to 552 (MTQSLPLLNG…HLDNFMAINS (552 aa)). ATP contacts are provided by residues G185, 249 to 250 (RC), and 279 to 282 (GDGS). Position 280 (D280) interacts with Mg(2+). Beta-D-fructose 6-phosphate is bound by residues 325 to 327 (SID), R362, 369 to 371 (MGR), E426, R454, and 460 to 463 (HVQR). Residue D327 is the Proton acceptor of the active site. The segment at 553–566 (ADHIEPKLPEHTHM) is interdomain linker. The tract at residues 567-938 (KIAIVNVGAP…ADHLVGRKKL (372 aa)) is C-terminal regulatory PFK domain 2. Beta-D-fructose 2,6-bisphosphate is bound by residues R637, 695 to 699 (TLSNN), R733, 740 to 742 (QGG), K826, 832 to 835 (HVQQ), and R915.

It belongs to the phosphofructokinase type A (PFKA) family. ATP-dependent PFK group I subfamily. Eukaryotic two domain clade 'E' sub-subfamily. In terms of assembly, heterooctamer of 4 alpha and 4 beta chains. It depends on Mg(2+) as a cofactor.

It is found in the cytoplasm. It catalyses the reaction beta-D-fructose 6-phosphate + ATP = beta-D-fructose 1,6-bisphosphate + ADP + H(+). Its pathway is carbohydrate degradation; glycolysis; D-glyceraldehyde 3-phosphate and glycerone phosphate from D-glucose: step 3/4. Allosterically activated by ADP, AMP, or fructose 2,6-bisphosphate, and allosterically inhibited by ATP or citrate. Its function is as follows. Catalyzes the phosphorylation of D-fructose 6-phosphate to fructose 1,6-bisphosphate by ATP, the first committing step of glycolysis. The polypeptide is ATP-dependent 6-phosphofructokinase subunit beta (PFK2) (Kluyveromyces lactis (strain ATCC 8585 / CBS 2359 / DSM 70799 / NBRC 1267 / NRRL Y-1140 / WM37) (Yeast)).